Here is a 241-residue protein sequence, read N- to C-terminus: Enterotoxin type H (241 aa).

Residues Met1–Ala24 form the signal peptide. An intrachain disulfide couples Cys106 to Cys116. Asp191, His230, and Asp232 together coordinate Zn(2+).

This sequence belongs to the staphylococcal/streptococcal toxin family. In terms of assembly, interacts with host MHC class II molecules composed of alpha/HLA-DRA and beta/HLA-DRB1 chains. Interacts with host TCR alpha-chain TRAV27. Requires Zn(2+) as cofactor.

Its subcellular location is the secreted. Staphylococcal enterotoxin that activates the host immune system by binding as unprocessed molecules to major histocompatibility (MHC) complex class II and T-cell receptor (TCR) molecules via their alpha domain, in particular TRAV27. In turn, this ternary complex activates a large number of T-lymphocytes initiating a systemic release of pro-inflammatory cytokines. Also causes the intoxication staphylococcal food poisoning syndrome. The illness characterized by high fever, hypotension, diarrhea, shock, and in some cases death. This Staphylococcus aureus protein is Enterotoxin type H (entH).